Reading from the N-terminus, the 198-residue chain is 7-methyl-GTP pyrophosphatase (198 aa).

Asp-72 (proton acceptor) is an active-site residue.

Belongs to the Maf family. YceF subfamily. A divalent metal cation serves as cofactor.

The protein localises to the cytoplasm. The enzyme catalyses N(7)-methyl-GTP + H2O = N(7)-methyl-GMP + diphosphate + H(+). In terms of biological role, nucleoside triphosphate pyrophosphatase that hydrolyzes 7-methyl-GTP (m(7)GTP). May have a dual role in cell division arrest and in preventing the incorporation of modified nucleotides into cellular nucleic acids. The chain is 7-methyl-GTP pyrophosphatase from Idiomarina loihiensis (strain ATCC BAA-735 / DSM 15497 / L2-TR).